The primary structure comprises 147 residues: UPF0306 protein YE0465 (147 aa).

It belongs to the UPF0306 family.

The sequence is that of UPF0306 protein YE0465 from Yersinia enterocolitica serotype O:8 / biotype 1B (strain NCTC 13174 / 8081).